The sequence spans 390 residues: Copper-containing nitrite reductase (390 aa).

A signal peptide spans 1–18; it reads MKRQALAAMIASLFALAA. Cys-19 is lipidated: N-palmitoyl cysteine. The S-diacylglycerol cysteine moiety is linked to residue Cys-19. Residues 30-51 are disordered; sequence ETPAAAAEAASSAAQTAAETPS. 2 consecutive Plastocyanin-like domains span residues 101-195 and 245-346; these read WTFD…ILVE and GHVG…LKVE. Cu cation is bound by residues His-134, His-139, His-174, Cys-175, His-183, and Met-188. His-139 contributes to the substrate binding site. Substrate is bound at residue His-280. His-329 lines the Cu cation pocket. The segment at 367 to 390 is disordered; the sequence is GAAPAASAPAASAPAASASEKSVY. Positions 368-390 are enriched in low complexity; it reads AAPAASAPAASAPAASASEKSVY. 3 tandem repeats follow at residues 371-375, 376-380, and 381-385. A 3 X 5 AA tandem repeats of A-A-S-A-P region spans residues 371 to 385; that stretch reads AASAPAASAPAASAS.

This sequence belongs to the multicopper oxidase family. Homotrimer. Requires Cu(+) as cofactor. It depends on Cu(2+) as a cofactor.

It is found in the cell outer membrane. It catalyses the reaction nitric oxide + Fe(III)-[cytochrome c] + H2O = Fe(II)-[cytochrome c] + nitrite + 2 H(+). Its function is as follows. Catalyzes the reduction of nitrite to nitric oxide (NO). It could be essential for growth and survival in oxygen-depleted environments. In Neisseria meningitidis serogroup B (strain ATCC BAA-335 / MC58), this protein is Copper-containing nitrite reductase (aniA).